A 383-amino-acid polypeptide reads, in one-letter code: MAEPRQEFDVMEDHAGTYGLGDRKDQEGYTMLQDQEGDTDAGLKAEEAGIGDTPSLEDEAAGHVTQARMVSKSKDGTGSDDKKAKGADGKTKIATPRGAAPPGQKGQANATRIPAKTPPAPKTPPSSGEPPKSGDRSGYSSPGSPGTPGSRSRTPSLPTPPAREPKKVAVVRTPPKSPSSAKSRLQTAPVPMPDLKNVKSKIGSTENLKHQPGGGKVQIINKKLDLSNVQSKCGSKDNIKHVPGGGSVQIVYKPVDLSKVTSKCGSLGNIHHKPGGGQVEVKSEKLDFKDRVQSKIGSLDNITHVPGGGNKKIETHKLTFRENAKAKTDHGAEIVYKSPVVSGDTSPRHLSNVSSTGSIDMVDSPQLATLADEVSASLAKQGL.

Positions 1–27 (MAEPRQEFDVMEDHAGTYGLGDRKDQE) are enriched in basic and acidic residues. The tract at residues 1–198 (MAEPRQEFDV…PVPMPDLKNV (198 aa)) is disordered. N-acetylalanine is present on Ala-2. Phosphotyrosine is present on residues Tyr-18 and Tyr-29. Residue Lys-44 forms a Glycyl lysine isopeptide (Lys-Gly) (interchain with G-Cter in ubiquitin) linkage. Thr-53 is modified (phosphothreonine). Residues 72–91 (KSKDGTGSDDKKAKGADGKT) are compositionally biased toward basic and acidic residues. Phosphothreonine is present on Thr-95. Position 97 is an omega-N-methylarginine (Arg-97). Lys-105 carries the N6,N6-dimethyllysine; alternate modification. Residue Lys-105 is modified to N6-acetyllysine; alternate. A phosphothreonine mark is found at Thr-111, Thr-117, and Thr-123. The span at 116–128 (KTPPAPKTPPSSG) shows a compositional bias: pro residues. 3 positions are modified to phosphoserine: Ser-127, Ser-133, and Ser-137. Residues 129–156 (EPPKSGDRSGYSSPGSPGTPGSRSRTPS) show a composition bias toward low complexity. The residue at position 139 (Tyr-139) is a Phosphotyrosine. A phosphoserine mark is found at Ser-140, Ser-141, and Ser-144. Phosphothreonine occurs at positions 147 and 154. Ser-156 is subject to Phosphoserine. Residue Thr-159 is modified to Phosphothreonine. Lys-167 carries the N6-acetyllysine modification. Thr-173 is modified (phosphothreonine). Residues Ser-177 and Ser-179 each carry the phosphoserine modification. 4 Tau/MAP repeats span residues 186 to 216 (QTAP…GGGK), 217 to 247 (VQII…GGGS), 248 to 278 (VQIV…GGGQ), and 279 to 310 (VEVK…GGGN). Lys-196 is covalently cross-linked (Glycyl lysine isopeptide (Lys-Gly) (interchain with G-Cter in ubiquitin)). N6-acetyllysine; alternate is present on Lys-201. Residue Lys-201 is modified to N6-methyllysine; alternate. A Glycyl lysine isopeptide (Lys-Gly) (interchain with G-Cter in ubiquitin); alternate cross-link involves residue Lys-201. Ser-204 carries the post-translational modification Phosphoserine. Residue Lys-209 forms a Glycyl lysine isopeptide (Lys-Gly) (interchain with G-Cter in ubiquitin) linkage. Lys-223 is subject to N6-acetyllysine; alternate. A Glycyl lysine isopeptide (Lys-Gly) (interchain with G-Cter in ubiquitin); alternate cross-link involves residue Lys-223. Phosphoserine is present on residues Ser-227 and Ser-231. Lys-232 carries the post-translational modification N6-acetyllysine. Residues Cys-233 and Cys-264 are joined by a disulfide bond. Ser-235 bears the Phosphoserine mark. Position 240 is an N6-acetyllysine; alternate (Lys-240). A Glycyl lysine isopeptide (Lys-Gly) (interchain with G-Cter in ubiquitin); alternate cross-link involves residue Lys-240. Ser-247 bears the Phosphoserine mark. Lys-253 carries the post-translational modification N6,N6-dimethyllysine; alternate. N6-acetyllysine; alternate is present on residues Lys-253, Lys-259, and Lys-263. Residues Lys-253, Lys-259, and Lys-263 each participate in a glycyl lysine isopeptide (Lys-Gly) (interchain with G-Cter in ubiquitin); alternate cross-link. Ser-266 carries the phosphoserine modification. Lys-273, Lys-285, and Lys-289 each carry N6-acetyllysine; alternate. Glycyl lysine isopeptide (Lys-Gly) (interchain with G-Cter in ubiquitin); alternate cross-links involve residues Lys-273, Lys-285, and Lys-289. Arg-291 is subject to Omega-N-methylarginine. Ser-294 carries the post-translational modification Phosphoserine. Lys-295 participates in a covalent cross-link: Glycyl lysine isopeptide (Lys-Gly) (interchain with G-Cter in ubiquitin). Position 298 is a phosphoserine (Ser-298). Lys-311 bears the N6-acetyllysine; alternate mark. A Glycyl lysine isopeptide (Lys-Gly) (interchain with G-Cter in ubiquitin); alternate cross-link involves residue Lys-311. A Glycyl lysine isopeptide (Lys-Gly) (interchain with G-Cter in ubiquitin) cross-link involves residue Lys-317. Lys-327 carries the post-translational modification N6-acetyllysine; alternate. Residue Lys-327 forms a Glycyl lysine isopeptide (Lys-Gly) (interchain with G-Cter in ubiquitin); alternate linkage. Tyr-336 carries the phosphotyrosine modification. Residues Ser-338 and Ser-342 each carry the phosphoserine modification. The disordered stretch occupies residues 340 to 359 (VVSGDTSPRHLSNVSSTGSI). The segment covering 343 to 358 (GDTSPRHLSNVSSTGS) has biased composition (polar residues). Residue Thr-345 is modified to Phosphothreonine. Residues Ser-346, Ser-351, Ser-358, and Ser-364 each carry the phosphoserine modification. A Phosphothreonine modification is found at Thr-369.

As to quaternary structure, interacts with MARK1, MARK2, MARK3 and MARK4. Interacts with SQSTM1 when polyubiquitinated. Interacts with PSMC2 through SQSTM1. Interacts with FKBP4. Binds to CSNK1D. Interacts with SGK1. Interacts with PIN1. Interacts with LRRK2. Interacts with LRP1, leading to endocytosis; this interaction is reduced in the presence of LRPAP1/RAP. In terms of processing, polyubiquitinated. Requires functional TRAF6 and may provoke SQSTM1-dependent degradation by the proteasome. Post-translationally, phosphorylation at various serine and threonine residues in S-P or T-P motifs by proline-directed protein kinases (PDPK1, CDK1, CDK5, GSK3, MAPK) (a few sites per protein in interphase, more in mitosis), and at serine residues in K-X-G-S motifs by MAP/microtubule affinity-regulating kinase (MARK1, MARK2, MARK3 or MARK4), causing detachment from microtubules, and their disassembly. Phosphorylation at Ser-204 by BRSK1 and BRSK2 in neurons affects ability to bind microtubules and plays a role in neuron polarization. Phosphorylated by PHK. Dephosphorylation at several serine and threonine residues by the serine/threonine phosphatase PPP5C. As to expression, expressed in neurons.

It localises to the cytoplasm. Its subcellular location is the cytosol. It is found in the cell membrane. The protein localises to the cytoskeleton. The protein resides in the cell projection. It localises to the axon. Its subcellular location is the dendrite. Functionally, promotes microtubule assembly and stability, and might be involved in the establishment and maintenance of neuronal polarity. The C-terminus binds axonal microtubules while the N-terminus binds neural plasma membrane components, suggesting that tau functions as a linker protein between both. Axonal polarity is predetermined by tau localization (in the neuronal cell) in the domain of the cell body defined by the centrosome. The protein is Microtubule-associated protein tau (MAPT) of Papio hamadryas (Hamadryas baboon).